The primary structure comprises 68 residues: uncharacterized protein (68 aa).

This is an uncharacterized protein from Invertebrate iridescent virus 3 (IIV-3).